The primary structure comprises 578 residues: 2-succinyl-5-enolpyruvyl-6-hydroxy-3-cyclohexene-1-carboxylate synthase (578 aa).

This sequence belongs to the TPP enzyme family. MenD subfamily. Homodimer. Requires Mg(2+) as cofactor. The cofactor is Mn(2+). It depends on thiamine diphosphate as a cofactor.

It carries out the reaction isochorismate + 2-oxoglutarate + H(+) = 5-enolpyruvoyl-6-hydroxy-2-succinyl-cyclohex-3-ene-1-carboxylate + CO2. It participates in quinol/quinone metabolism; 1,4-dihydroxy-2-naphthoate biosynthesis; 1,4-dihydroxy-2-naphthoate from chorismate: step 2/7. The protein operates within quinol/quinone metabolism; menaquinone biosynthesis. Functionally, catalyzes the thiamine diphosphate-dependent decarboxylation of 2-oxoglutarate and the subsequent addition of the resulting succinic semialdehyde-thiamine pyrophosphate anion to isochorismate to yield 2-succinyl-5-enolpyruvyl-6-hydroxy-3-cyclohexene-1-carboxylate (SEPHCHC). This Prosthecochloris aestuarii (strain DSM 271 / SK 413) protein is 2-succinyl-5-enolpyruvyl-6-hydroxy-3-cyclohexene-1-carboxylate synthase.